The following is a 330-amino-acid chain: MNFIDEVKIYIKGGNGGNGCVSFHREKFIDRGGPDGGDGGRGGSVIFRSNHHLNTLVNYRYKQHFTAENGENGKGSNRSGKSGKSLVLDVPIGTQIFSEDGNILLHDFTEDDQSFEIIKGGSGGLGNSHFKTSVNQAPRKRTEGEIAEEMWIHLSLKLLSDVGLVGLPNAGKSTFLSVVTAAKPKIADYPFTTLVPHLGVVYVDDEEFVIADIPGLIEGAHQGHGLGDKFLKHIERCNVLIHLIDGSSNDVVVDYNTVRLELGSYSDHLEHKIEIICLNKCDVLTDEEIQEKINKLQQATNKEVFSISTYTNLGVNKIVKLALKIIKNQE.

The 159-residue stretch at 1-159 folds into the Obg domain; that stretch reads MNFIDEVKIY…MWIHLSLKLL (159 aa). The OBG-type G domain maps to 160–327; it reads SDVGLVGLPN…IVKLALKIIK (168 aa). GTP contacts are provided by residues 166-173, 191-195, 212-215, 279-282, and 308-310; these read GLPNAGKS, FTTLV, DIPG, NKCD, and STY. Mg(2+) is bound by residues S173 and T193.

It belongs to the TRAFAC class OBG-HflX-like GTPase superfamily. OBG GTPase family. As to quaternary structure, monomer. Mg(2+) is required as a cofactor.

The protein localises to the cytoplasm. In terms of biological role, an essential GTPase which binds GTP, GDP and possibly (p)ppGpp with moderate affinity, with high nucleotide exchange rates and a fairly low GTP hydrolysis rate. Plays a role in control of the cell cycle, stress response, ribosome biogenesis and in those bacteria that undergo differentiation, in morphogenesis control. The polypeptide is GTPase Obg (Rickettsia akari (strain Hartford)).